The chain runs to 148 residues: Arginine repressor (148 aa).

Belongs to the ArgR family.

Its subcellular location is the cytoplasm. Its pathway is amino-acid biosynthesis; L-arginine biosynthesis [regulation]. Regulates arginine biosynthesis genes. This is Arginine repressor from Koribacter versatilis (strain Ellin345).